Consider the following 86-residue polypeptide: DNA-directed RNA polymerase subunit omega (86 aa).

It belongs to the RNA polymerase subunit omega family. The RNAP catalytic core consists of 2 alpha, 1 beta, 1 beta' and 1 omega subunit. When a sigma factor is associated with the core the holoenzyme is formed, which can initiate transcription.

The catalysed reaction is RNA(n) + a ribonucleoside 5'-triphosphate = RNA(n+1) + diphosphate. Its function is as follows. Promotes RNA polymerase assembly. Latches the N- and C-terminal regions of the beta' subunit thereby facilitating its interaction with the beta and alpha subunits. This chain is DNA-directed RNA polymerase subunit omega, found in Psychrobacter arcticus (strain DSM 17307 / VKM B-2377 / 273-4).